A 450-amino-acid chain; its full sequence is MAPALSPTRSHHVAVIGAGPAGLVAARELRREGHSVVVFEKQKQVGGTWIYTDEVESDPLSVDPTRSVVHSSVYRSLRINGTRECTGYRDFPFVVRSGVSRDPRRFPSHGEVLAYLKDFAKEFGIEEMVRFETEVVKVSPAAEEGIGKWRIESTEKEKKVRRDEIYDAVVVCNGHYVEPRLAQIPGISSWPGKEMHSHNYRIPEPFRDKVVVLIGNSSSAEDISRDIARVAKEVHVACRSNPADTFIKQTGYNNLWTHSMIESVHEDGSVVYQNGKTISVDIIMHCTGYKYHFPFLDTNGIVTVDDNRVGPLYKDVFPPAFAPWLSFIGIPWQVLPFPMFELQSKWIAGVLSGRIPLPSKEDMMIEIKTFYSTLEVQGIPKRYTHRMGNTQFEYYNWLASQCGCSETEEWRKEMCLANGVRKEAHPETYRDEWDDHHLVSEAYQDFSLYS.

Residue Gly17–Gly22 participates in FAD binding. Gly215–Ala220 contacts NADP(+).

This sequence belongs to the FMO family. FAD is required as a cofactor.

Catalyzes the conversion of methylthioalkyl glucosinolates of any chain length into methylsulfinylalkyl glucosinolates. The chain is Flavin-containing monooxygenase FMO GS-OX-like 3 from Arabidopsis thaliana (Mouse-ear cress).